A 451-amino-acid polypeptide reads, in one-letter code: Uronate isomerase (451 aa).

It belongs to the metallo-dependent hydrolases superfamily. Uronate isomerase family.

It carries out the reaction D-glucuronate = D-fructuronate. The enzyme catalyses aldehydo-D-galacturonate = keto-D-tagaturonate. It functions in the pathway carbohydrate metabolism; pentose and glucuronate interconversion. In Thermotoga neapolitana (strain ATCC 49049 / DSM 4359 / NBRC 107923 / NS-E), this protein is Uronate isomerase.